The sequence spans 84 residues: ATP synthase subunit c (84 aa).

The next 2 membrane-spanning stretches (helical) occupy residues A21–I38 and M60–L80.

The protein belongs to the ATPase C chain family. In terms of assembly, F-type ATPases have 2 components, F(1) - the catalytic core - and F(0) - the membrane proton channel. F(1) has five subunits: alpha(3), beta(3), gamma(1), delta(1), epsilon(1). F(0) has three main subunits: a(1), b(2) and c(10-14). The alpha and beta chains form an alternating ring which encloses part of the gamma chain. F(1) is attached to F(0) by a central stalk formed by the gamma and epsilon chains, while a peripheral stalk is formed by the delta and b chains.

The protein resides in the cell inner membrane. F(1)F(0) ATP synthase produces ATP from ADP in the presence of a proton or sodium gradient. F-type ATPases consist of two structural domains, F(1) containing the extramembraneous catalytic core and F(0) containing the membrane proton channel, linked together by a central stalk and a peripheral stalk. During catalysis, ATP synthesis in the catalytic domain of F(1) is coupled via a rotary mechanism of the central stalk subunits to proton translocation. Functionally, key component of the F(0) channel; it plays a direct role in translocation across the membrane. A homomeric c-ring of between 10-14 subunits forms the central stalk rotor element with the F(1) delta and epsilon subunits. The sequence is that of ATP synthase subunit c from Phocaeicola vulgatus (strain ATCC 8482 / DSM 1447 / JCM 5826 / CCUG 4940 / NBRC 14291 / NCTC 11154) (Bacteroides vulgatus).